The following is a 504-amino-acid chain: Phosphoenolpyruvate carboxylase (504 aa).

Residues 1–16 (MTSRKIPSIMGTQHPD) show a composition bias toward polar residues. The disordered stretch occupies residues 1-21 (MTSRKIPSIMGTQHPDNANAP).

This sequence belongs to the PEPCase type 2 family. In terms of assembly, homotetramer. Requires Mg(2+) as cofactor.

The catalysed reaction is oxaloacetate + phosphate = phosphoenolpyruvate + hydrogencarbonate. In terms of biological role, catalyzes the irreversible beta-carboxylation of phosphoenolpyruvate (PEP) to form oxaloacetate (OAA), a four-carbon dicarboxylic acid source for the tricarboxylic acid cycle. This Leuconostoc mesenteroides subsp. mesenteroides (strain ATCC 8293 / DSM 20343 / BCRC 11652 / CCM 1803 / JCM 6124 / NCDO 523 / NBRC 100496 / NCIMB 8023 / NCTC 12954 / NRRL B-1118 / 37Y) protein is Phosphoenolpyruvate carboxylase.